We begin with the raw amino-acid sequence, 325 residues long: Nod factor export ATP-binding protein I (325 aa).

Positions 27-257 constitute an ABC transporter domain; sequence LELRKVRKQY…QIGCDVVEVY (231 aa). 59–66 contributes to the ATP binding site; it reads GPNGAGKT.

This sequence belongs to the ABC transporter superfamily. Lipooligosaccharide exporter (TC 3.A.1.102) family. The complex is composed of two ATP-binding proteins (NodI) and two transmembrane proteins (NodJ).

Its subcellular location is the cell inner membrane. Its function is as follows. Part of the ABC transporter complex NodIJ involved in the export of the nodulation factors (Nod factors), the bacterial signal molecules that induce symbiosis and subsequent nodulation induction. Nod factors are LCO (lipo-chitin oligosaccharide), a modified beta-1,4-linked N-acetylglucosamine oligosaccharide. This subunit is responsible for energy coupling to the transport system. This Cupriavidus pinatubonensis (strain JMP 134 / LMG 1197) (Cupriavidus necator (strain JMP 134)) protein is Nod factor export ATP-binding protein I.